Reading from the N-terminus, the 506-residue chain is Apolipoprotein N-acyltransferase (506 aa).

The next 6 membrane-spanning stretches (helical) occupy residues 24-44, 58-78, 85-105, 125-145, 162-182, and 192-212; these read LALA…MFYL, GWCY…VSIH, ALLA…FFAL, LAFA…LTGF, LAPV…AALL, and KSFL…GLAL. The CN hydrolase domain maps to 230–470; sequence MQGNIEQSMK…RGVLYGEVVP (241 aa). Glu269 (proton acceptor) is an active-site residue. Residue Lys330 is part of the active site. The active-site Nucleophile is the Cys382. Residues 482–502 traverse the membrane as a helical segment; the sequence is SWPLAIVCLLLFGWALLAARI.

Belongs to the CN hydrolase family. Apolipoprotein N-acyltransferase subfamily.

The protein resides in the cell inner membrane. It carries out the reaction N-terminal S-1,2-diacyl-sn-glyceryl-L-cysteinyl-[lipoprotein] + a glycerophospholipid = N-acyl-S-1,2-diacyl-sn-glyceryl-L-cysteinyl-[lipoprotein] + a 2-acyl-sn-glycero-3-phospholipid + H(+). It participates in protein modification; lipoprotein biosynthesis (N-acyl transfer). Functionally, catalyzes the phospholipid dependent N-acylation of the N-terminal cysteine of apolipoprotein, the last step in lipoprotein maturation. The polypeptide is Apolipoprotein N-acyltransferase (Pseudomonas syringae pv. tomato (strain ATCC BAA-871 / DC3000)).